The sequence spans 363 residues: MQVTAPRTLLLLLSAALALTETWAGSHSMRYFHTAMSRPGRGEPRFITVGYVDDTQFVWFDSDAASPRKEPRTPWIEQEGPEYWDRETQISKTNTQTYRVGLGTLRGYYNQSEDGSHTIQRMYGCDMGPDGRLLRGYSQLAYDGKDYLALNEDLSSWTAADTAAQITQRKWEAARAAEQERAYLEGLCVEWLRRYLENGKETLQRADPPKTHVTHHPISDHEATLRCWALGFYPAEITLTWQRDGEDQTQDTELVETRPAGDRTFQKWAAVVVPSGEEQRYTCRVQHEGLPEPLTLRWEPSSQSTIPIVGIVAGLAVLVVTVAVVAVVAAVMCRRKSSGGKGGSYSQAASSDSAQGSDVSLTA.

An N-terminal signal peptide occupies residues 1–24; it reads MQVTAPRTLLLLLSAALALTETWA. Residues 25–114 are alpha-1; the sequence is GSHSMRYFHT…LRGYYNQSED (90 aa). Over 25-308 the chain is Extracellular; the sequence is GSHSMRYFHT…EPSSQSTIPI (284 aa). Asparagine 110 carries an N-linked (GlcNAc...) asparagine glycan. The interval 115-206 is alpha-2; it reads GSHTIQRMYG…ENGKETLQRA (92 aa). Intrachain disulfides connect cysteine 125–cysteine 188 and cysteine 227–cysteine 283. The segment at 207-298 is alpha-3; sequence DPPKTHVTHH…GLPEPLTLRW (92 aa). Positions 209–297 constitute an Ig-like C1-type domain; sequence PKTHVTHHPI…EGLPEPLTLR (89 aa). The segment at 299–308 is connecting peptide; that stretch reads EPSSQSTIPI. A helical transmembrane segment spans residues 309-333; that stretch reads VGIVAGLAVLVVTVAVVAVVAAVMC. At 334–363 the chain is on the cytoplasmic side; that stretch reads RRKSSGGKGGSYSQAASSDSAQGSDVSLTA. Residues 336-363 are disordered; it reads KSSGGKGGSYSQAASSDSAQGSDVSLTA. Over residues 344–363 the composition is skewed to low complexity; the sequence is SYSQAASSDSAQGSDVSLTA.

The protein belongs to the MHC class I family. As to quaternary structure, heterodimer of an alpha chain and a beta chain (beta-2-microglobulin).

It localises to the membrane. In terms of biological role, involved in the presentation of foreign antigens to the immune system. In Gorilla gorilla gorilla (Western lowland gorilla), this protein is Class I histocompatibility antigen, Gogo-B*0201 alpha chain.